The sequence spans 224 residues: UPF0758 protein CV_3079 (224 aa).

The MPN domain occupies 102 to 224; that stretch reads ALSSPQQVRD…AESFAERGWL (123 aa). H173, H175, and D186 together coordinate Zn(2+). Positions 173 to 186 match the JAMM motif motif; the sequence is HNHPSGVSEPSSAD.

It belongs to the UPF0758 family.

This chain is UPF0758 protein CV_3079, found in Chromobacterium violaceum (strain ATCC 12472 / DSM 30191 / JCM 1249 / CCUG 213 / NBRC 12614 / NCIMB 9131 / NCTC 9757 / MK).